A 49-amino-acid chain; its full sequence is Protein YdfW (49 aa).

The segment at 16 to 49 is disordered; it reads PKADHPWLTRRTQSHQQVKPPKLPKKKPDPDKKD.

May be involved in H(2) production during fermentative growth. The sequence is that of Protein YdfW (ydfW) from Escherichia coli (strain K12).